We begin with the raw amino-acid sequence, 444 residues long: Probable glycine dehydrogenase (decarboxylating) subunit 1 (444 aa).

The protein belongs to the GcvP family. N-terminal subunit subfamily. The glycine cleavage system is composed of four proteins: P, T, L and H. In this organism, the P 'protein' is a heterodimer of two subunits.

The catalysed reaction is N(6)-[(R)-lipoyl]-L-lysyl-[glycine-cleavage complex H protein] + glycine + H(+) = N(6)-[(R)-S(8)-aminomethyldihydrolipoyl]-L-lysyl-[glycine-cleavage complex H protein] + CO2. Functionally, the glycine cleavage system catalyzes the degradation of glycine. The P protein binds the alpha-amino group of glycine through its pyridoxal phosphate cofactor; CO(2) is released and the remaining methylamine moiety is then transferred to the lipoamide cofactor of the H protein. This chain is Probable glycine dehydrogenase (decarboxylating) subunit 1, found in Carboxydothermus hydrogenoformans (strain ATCC BAA-161 / DSM 6008 / Z-2901).